Reading from the N-terminus, the 275-residue chain is UPF0758 protein RL2068 (275 aa).

The interval 1–45 is disordered; sequence MAKGPVSTSSDDELPFETQEPIAADERSFFGGQPQKPSAPNARAA. Residues 153 to 275 form the MPN domain; that stretch reads VLSSWSSVIQ…HVSLKGLKLI (123 aa). Residues histidine 224, histidine 226, and aspartate 237 each coordinate Zn(2+). Positions 224–237 match the JAMM motif motif; sequence HNHPSGDPTPSRAD.

It belongs to the UPF0758 family.

The polypeptide is UPF0758 protein RL2068 (Rhizobium johnstonii (strain DSM 114642 / LMG 32736 / 3841) (Rhizobium leguminosarum bv. viciae)).